Reading from the N-terminus, the 125-residue chain is Cysteine proteinase inhibitor 3 (125 aa).

A signal peptide spans 1–22 (MESKTFWIVTLLLCGTIQLAIC). The region spanning 36 to 124 (GGVHDLRGNQ…KQLQEFKESS (89 aa)) is the Cystatin domain. Residues 80–84 (QVVAG) carry the Secondary area of contact motif.

The protein belongs to the cystatin family. Phytocystatin subfamily.

It localises to the secreted. Its function is as follows. Specific inhibitor of cysteine proteinases. Probably involved in the regulation of endogenous processes and in defense against pests and pathogens. The chain is Cysteine proteinase inhibitor 3 (CYS3) from Arabidopsis thaliana (Mouse-ear cress).